We begin with the raw amino-acid sequence, 177 residues long: Putative acetyltransferase FG08082 (177 aa).

In terms of domain architecture, N-acetyltransferase spans 81–174; the sequence is EEWEQVGLVR…VSIAMVEGPG (94 aa).

Belongs to the acetyltransferase family.

Its pathway is mycotoxin biosynthesis. Its function is as follows. Putative acetyltransferase; part of the gene cluster that mediates the biosynthesis of butenolide, a mycotoxin that shows antibiotic activity but does not seem to play a major role in the spread of head blight in wheat. Butenolide is derived from glutamic acid via a 4-acetamido-2-butenoic acid intermediate. The predicted function of the NADH:flavin oxidoreductase FG08077, the cytochrome P450 monooxygenase FG08079, the decarboxylase FG08083, and the putative acetyltransferase FG08082 are consistent with this pathway, however, the respective activities of the butelonide biosynthesis cluster enzymes have still to be experimentally determined. This Gibberella zeae (strain ATCC MYA-4620 / CBS 123657 / FGSC 9075 / NRRL 31084 / PH-1) (Wheat head blight fungus) protein is Putative acetyltransferase FG08082.